The following is a 117-amino-acid chain: Mitochondrial zinc maintenance protein 1, mitochondrial (117 aa).

The N-terminal 10 residues, 1 to 10, are a transit peptide targeting the mitochondrion; that stretch reads MSATLSAYRN. The segment at 91-117 is disordered; that stretch reads NESIKQGKKNLGSLAGKKGSSIRSCKD.

This sequence belongs to the complex I LYR family. MZM1 subfamily. As to quaternary structure, interacts with RIP1.

Its subcellular location is the mitochondrion matrix. Its function is as follows. Assembly factor required for Rieske Fe-S protein RIP1 incorporation into the cytochrome b-c1 (CIII) complex. Functions as a chaperone, binding to this subunit within the mitochondrial matrix and stabilizing it prior to its translocation and insertion into the late CIII dimeric intermediate within the mitochondrial inner membrane. Modulates the mitochondrial matrix zinc pool. This is Mitochondrial zinc maintenance protein 1, mitochondrial (MZM1) from Candida tropicalis (strain ATCC MYA-3404 / T1) (Yeast).